The primary structure comprises 31 residues: Cyclopsychotride-A (31 aa).

The segment at residues 1–31 (SIPCGESCVFIPCTVTALLGCSCKSKVCYKN) is a cross-link (cyclopeptide (Ser-Asn)). 3 cysteine pairs are disulfide-bonded: cysteine 4-cysteine 21, cysteine 8-cysteine 23, and cysteine 13-cysteine 28.

This sequence belongs to the cyclotide family. Bracelet subfamily. Post-translationally, this is a cyclic peptide.

Functionally, probably participates in a plant defense mechanism. Has antibiotic activity. Inhibits the cytopathic effects and replication of the human immunodeficiency virus. Active against both Gram-positive and Gram-negative bacteria. In Psychotria longipes, this protein is Cyclopsychotride-A.